A 198-amino-acid chain; its full sequence is Recombination protein RecR (198 aa).

Residues 57-72 form a C4-type zinc finger; that stretch reads CSVCGHITENDPCYIC. The Toprim domain maps to 80–175; that stretch reads SVICVVEDDK…KVTRLAQGLS (96 aa).

It belongs to the RecR family.

In terms of biological role, may play a role in DNA repair. It seems to be involved in an RecBC-independent recombinational process of DNA repair. It may act with RecF and RecO. The protein is Recombination protein RecR of Staphylococcus aureus (strain Mu3 / ATCC 700698).